An 80-amino-acid chain; its full sequence is Conotoxin MaIr193 (80 aa).

An N-terminal signal peptide occupies residues 1–22 (MKLTCMMIVAVLFLTAWTLVTA). A propeptide spanning residues 23 to 51 (DGTRDGLKNRFPKARLEMKNSEAPRSRGR) is cleaved from the precursor. 3 cysteine pairs are disulfide-bonded: C52-C69, C59-C73, and C68-C77. P64 carries the post-translational modification 4-hydroxyproline.

The protein belongs to the conotoxin O1 superfamily. As to expression, expressed by the venom duct.

The protein resides in the secreted. The polypeptide is Conotoxin MaIr193 (Conus marmoreus (Marble cone)).